Consider the following 423-residue polypeptide: Glutamate-1-semialdehyde 2,1-aminomutase (423 aa).

K266 carries the post-translational modification N6-(pyridoxal phosphate)lysine.

The protein belongs to the class-III pyridoxal-phosphate-dependent aminotransferase family. HemL subfamily. As to quaternary structure, homodimer. The cofactor is pyridoxal 5'-phosphate.

It is found in the cytoplasm. The enzyme catalyses (S)-4-amino-5-oxopentanoate = 5-aminolevulinate. Its pathway is porphyrin-containing compound metabolism; protoporphyrin-IX biosynthesis; 5-aminolevulinate from L-glutamyl-tRNA(Glu): step 2/2. This is Glutamate-1-semialdehyde 2,1-aminomutase from Nitratidesulfovibrio vulgaris (strain ATCC 29579 / DSM 644 / CCUG 34227 / NCIMB 8303 / VKM B-1760 / Hildenborough) (Desulfovibrio vulgaris).